Reading from the N-terminus, the 462-residue chain is Argininosuccinate lyase (462 aa).

This sequence belongs to the lyase 1 family. Argininosuccinate lyase subfamily.

The protein resides in the cytoplasm. It catalyses the reaction 2-(N(omega)-L-arginino)succinate = fumarate + L-arginine. Its pathway is amino-acid biosynthesis; L-arginine biosynthesis; L-arginine from L-ornithine and carbamoyl phosphate: step 3/3. This Pelagibacter ubique (strain HTCC1062) protein is Argininosuccinate lyase.